The chain runs to 374 residues: MLTCIACTKQLNTNNGGSKKQEEDEEEEDRVIETPRSKQIKSLTSQIKDMAVKASGAYKSCKPCSGSSNQNKNRSYADSDVASNSGRFRYAYKRAGSGSSTPKILGKEMESRLKGFLSGEGTPESMSGRTESTVFMEEEDELKEWVAQVEPGVLITFVSLPEGGNDMKRIRFSREMFDKWQAQKWWAENFDKVMELYNVQQFNQQSVPLPTPPRSEDGSSRIQSTKNGPATPPLNKECSRGKGYASSGSLAHQPTTQTQSRHHDSSGLATTPKLSSISGTKTETSSVDESARSSFSREEEEADHSGEELSVSNASDIETEWVEQDEAGVYITIRALPDGTRELRRVRFSREKFGETNARLWWEQNRARIQQQYL.

Disordered regions lie at residues 12–43 (NTNN…IKSL) and 57–80 (AYKS…ADSD). Over residues 65-80 (SGSSNQNKNRSYADSD) the composition is skewed to polar residues. In terms of domain architecture, BRX 1 spans 143–198 (KEWVAQVEPGVLITFVSLPEGGNDMKRIRFSREMFDKWQAQKWWAENFDKVMELYN). Residues 205–316 (QSVPLPTPPR…EELSVSNASD (112 aa)) form a disordered region. 2 stretches are compositionally biased toward polar residues: residues 246–259 (SSGS…TQTQ) and 267–288 (GLAT…SSVD). Residues 289–307 (ESARSSFSREEEEADHSGE) are compositionally biased toward basic and acidic residues. Residues 319–374 (TEWVEQDEAGVYITIRALPDGTRELRRVRFSREKFGETNARLWWEQNRARIQQQYL) enclose the BRX 2 domain.

This sequence belongs to the BRX family. As to expression, expressed in roots.

It is found in the nucleus. The chain is Protein Brevis radix-like 2 (BRXL2) from Arabidopsis thaliana (Mouse-ear cress).